The primary structure comprises 84 residues: Small ribosomal subunit protein uS17 (84 aa).

It belongs to the universal ribosomal protein uS17 family. Part of the 30S ribosomal subunit.

Functionally, one of the primary rRNA binding proteins, it binds specifically to the 5'-end of 16S ribosomal RNA. In Salmonella typhi, this protein is Small ribosomal subunit protein uS17.